Here is a 703-residue protein sequence, read N- to C-terminus: Polyribonucleotide nucleotidyltransferase (703 aa).

2 residues coordinate Mg(2+): aspartate 488 and aspartate 494. Positions 555–614 (PKIVKMQINPDKIKDVIGPGGKIITKIIDETGVKIDIEQTGEVFISGIEIDMIKKAQELI) constitute a KH domain. The region spanning 624 to 692 (GKTYKGKVSR…EKGRVNLSRK (69 aa)) is the S1 motif domain.

The protein belongs to the polyribonucleotide nucleotidyltransferase family. It depends on Mg(2+) as a cofactor.

The protein resides in the cytoplasm. The catalysed reaction is RNA(n+1) + phosphate = RNA(n) + a ribonucleoside 5'-diphosphate. Involved in mRNA degradation. Catalyzes the phosphorolysis of single-stranded polyribonucleotides processively in the 3'- to 5'-direction. The polypeptide is Polyribonucleotide nucleotidyltransferase (Clostridioides difficile (strain 630) (Peptoclostridium difficile)).